Consider the following 156-residue polypeptide: Small ribosomal subunit protein uS7 (156 aa).

The protein belongs to the universal ribosomal protein uS7 family. As to quaternary structure, part of the 30S ribosomal subunit. Contacts proteins S9 and S11.

Functionally, one of the primary rRNA binding proteins, it binds directly to 16S rRNA where it nucleates assembly of the head domain of the 30S subunit. Is located at the subunit interface close to the decoding center, probably blocks exit of the E-site tRNA. The polypeptide is Small ribosomal subunit protein uS7 (Beijerinckia indica subsp. indica (strain ATCC 9039 / DSM 1715 / NCIMB 8712)).